The chain runs to 166 residues: Polyadenylate-binding protein 2 (166 aa).

The region spanning 55 to 132 (QSVYVGNVDY…RPLKVTPKRT (78 aa)) is the RRM domain. Positions 129–166 (PKRTNVPGMSRGRGRGRGRGRGRGRGGYRGRARGFAPY) are disordered. Residues 140-160 (GRGRGRGRGRGRGRGGYRGRA) show a composition bias toward basic residues.

The protein resides in the nucleus. This Schizosaccharomyces pombe (strain 972 / ATCC 24843) (Fission yeast) protein is Polyadenylate-binding protein 2 (pab2).